A 244-amino-acid chain; its full sequence is High frequency lysogenization protein HflD homolog (244 aa).

It belongs to the HflD family.

It localises to the cytoplasm. It is found in the cell inner membrane. The chain is High frequency lysogenization protein HflD homolog from Acinetobacter baumannii (strain ATCC 17978 / DSM 105126 / CIP 53.77 / LMG 1025 / NCDC KC755 / 5377).